We begin with the raw amino-acid sequence, 389 residues long: Na(+)/H(+) antiporter NhaA 1 (389 aa).

A run of 11 helical transmembrane segments spans residues alanine 14–leucine 34, phenylalanine 47–isoleucine 67, isoleucine 87–phenylalanine 107, glycine 117–glycine 137, valine 146–phenylalanine 166, leucine 171–alanine 191, leucine 197–histidine 217, valine 252–valine 272, methionine 280–phenylalanine 300, isoleucine 321–leucine 341, and leucine 356–serine 376.

Belongs to the NhaA Na(+)/H(+) (TC 2.A.33) antiporter family.

Its subcellular location is the cell inner membrane. It carries out the reaction Na(+)(in) + 2 H(+)(out) = Na(+)(out) + 2 H(+)(in). Functionally, na(+)/H(+) antiporter that extrudes sodium in exchange for external protons. This chain is Na(+)/H(+) antiporter NhaA 1, found in Vibrio vulnificus (strain CMCP6).